Reading from the N-terminus, the 119-residue chain is Small ribosomal subunit protein uS13 (119 aa).

The interval 96-119 is disordered; the sequence is PVRGQRTKTNARTRKGPRKLIKSR.

Belongs to the universal ribosomal protein uS13 family. As to quaternary structure, part of the 30S ribosomal subunit. Forms a loose heterodimer with protein S19. Forms two bridges to the 50S subunit in the 70S ribosome.

Its function is as follows. Located at the top of the head of the 30S subunit, it contacts several helices of the 16S rRNA. In the 70S ribosome it contacts the 23S rRNA (bridge B1a) and protein L5 of the 50S subunit (bridge B1b), connecting the 2 subunits; these bridges are implicated in subunit movement. Contacts the tRNAs in the A and P-sites. This chain is Small ribosomal subunit protein uS13, found in Buchnera aphidicola subsp. Cinara cedri (strain Cc).